Reading from the N-terminus, the 694-residue chain is DNA-binding protein RFX2 (694 aa).

A DNA-binding region (RFX-type winged-helix) is located at residues 174–249 (HLQWLLDNYE…YHYYGIRLKP (76 aa)). Disordered stretches follow at residues 268 to 309 (QPIH…SQHH) and 659 to 694 (DDVS…MQEM). A compositionally biased stretch (polar residues) spans 288–299 (NTANSSQHTSPE). The span at 300–309 (QSVAAQSQHH) shows a compositional bias: low complexity.

The protein belongs to the RFX family. As to quaternary structure, homodimer. Heterodimer; heterodimerizes with other rfx proteins.

It localises to the nucleus. The protein localises to the cytoplasm. In terms of biological role, transcription factor that acts as a key regulator of ciliogenesis. Specifically regulates expression of genes required for cilium assembly and function. Recognizes and binds the X-box, a regulatory motif with DNA sequence 5'-GTNRCC(0-3N)RGYAAC-3' present on promoters. Required for neural tube closure and neural ciliogenesis. This is DNA-binding protein RFX2 (rfx2) from Xenopus tropicalis (Western clawed frog).